A 173-amino-acid polypeptide reads, in one-letter code: RNA pyrophosphohydrolase (173 aa).

One can recognise a Nudix hydrolase domain in the interval 11 to 164 (PYRKCVGIVV…KKHVYMKVVS (154 aa)). The short motif at 52–73 (GGIDEDEKPLDAAYRELYEETG) is the Nudix box element.

This sequence belongs to the Nudix hydrolase family. RppH subfamily. The cofactor is a divalent metal cation.

Functionally, accelerates the degradation of transcripts by removing pyrophosphate from the 5'-end of triphosphorylated RNA, leading to a more labile monophosphorylated state that can stimulate subsequent ribonuclease cleavage. The polypeptide is RNA pyrophosphohydrolase (Bartonella tribocorum (strain CIP 105476 / IBS 506)).